The following is a 674-amino-acid chain: 1,4-alpha-glucan branching enzyme GlgB 1 (674 aa).

Asp336 functions as the Nucleophile in the catalytic mechanism. Glu389 acts as the Proton donor in catalysis.

Belongs to the glycosyl hydrolase 13 family. GlgB subfamily. Monomer.

It carries out the reaction Transfers a segment of a (1-&gt;4)-alpha-D-glucan chain to a primary hydroxy group in a similar glucan chain.. It participates in glycan biosynthesis; glycogen biosynthesis. Its function is as follows. Catalyzes the formation of the alpha-1,6-glucosidic linkages in glycogen by scission of a 1,4-alpha-linked oligosaccharide from growing alpha-1,4-glucan chains and the subsequent attachment of the oligosaccharide to the alpha-1,6 position. The sequence is that of 1,4-alpha-glucan branching enzyme GlgB 1 (glgB1) from Clostridium perfringens (strain 13 / Type A).